The chain runs to 215 residues: MTSRGAARPNGQSQASKICQFKLVLLGESAVGKSSLVLRFVKGQFHEYQESTIGAAFLTQSVCLDDTTVKFEIWDTAGQERYHSLAPMYYRGAQAAIVVYDITNQETFARAKTWVKELQRQASPSIVIALAGNKADLASKRMVEYEEAQAYADDNSLLFMETSAKTAMNVNDLFLAIAKKLPKSEPQSTSGAAGRSRGVDLHEQTQQNKSQCCSN.

15 residues coordinate GTP: Ser29, Ala30, Gly32, Lys33, Ser34, Ser35, His46, Glu47, Thr52, Gly78, Asn133, Lys134, Asp136, Ala164, and Lys165. Ser34 is a binding site for Mg(2+). 2 consecutive short sequence motifs (switch) follow at residues Gln44–Ala56 and Ala77–Ala93. Thr52 serves as a coordination point for Mg(2+). A disordered region spans residues Ser184–Asn215. Positions Gln204–Asn215 are enriched in polar residues. 2 S-geranylgeranyl cysteine lipidation sites follow: Cys212 and Cys213.

This sequence belongs to the small GTPase superfamily. Rab family. Requires Mg(2+) as cofactor.

The protein localises to the cell membrane. The protein resides in the early endosome membrane. The catalysed reaction is GTP + H2O = GDP + phosphate + H(+). Its activity is regulated as follows. Regulated by guanine nucleotide exchange factors (GEFs) which promote the exchange of bound GDP for free GTP. Regulated by GTPase activating proteins (GAPs) which increase the GTP hydrolysis activity. Inhibited by GDP dissociation inhibitors (GDIs). Its function is as follows. The small GTPases Rab are key regulators of intracellular membrane trafficking, from the formation of transport vesicles to their fusion with membranes. Rabs cycle between an inactive GDP-bound form and an active GTP-bound form that is able to recruit to membranes different sets of downstream effectors directly responsible for vesicle formation, movement, tethering and fusion. In Gallus gallus (Chicken), this protein is Ras-related protein Rab-5B (RAB5B).